The chain runs to 373 residues: MVCVPYLLLLLLPSLLRVSADTTEPCELDDDDFRCVCNFTDPKPDWSSAVQCMVAVEVEISAGGRSLEQFLKGADTNPKQYADTIKALRVRRLKLGAAQVPAQLLVAVLRALGYSRLKELTLEDLEVTGPTPPTPLEAAGPALTTLSLRNVSWTTGGAWLGELQQWLKPGLRVLNIAQAHSLAFPCAGLSTFEALTTLDLSDNPSLGDSGLMAALCPNKFPALQYLALRNAGMETPSGVCAALAAARVQPQSLDLSHNSLRVTAPGATRCVWPSALRSLNLSFAGLEQVPKGLPPKLSVLDLSCNKLSREPRRDELPEVNDLTLDGNPFLDPGALQHQNDPMISGVVPACARSALTMGVSGALALLQGARGFA.

Residues 1–20 (MVCVPYLLLLLLPSLLRVSA) form the signal peptide. Intrachain disulfides connect C26–C37 and C35–C52. N-linked (GlcNAc...) asparagine glycosylation is present at N38. LRR repeat units lie at residues 55–81 (AVEV…PKQY), 82–117 (ADTI…YSRL), 118–143 (KELT…GPAL), 144–171 (TTLS…KPGL), 172–195 (RVLN…FEAL), 196–223 (TTLD…FPAL), 224–250 (QYLA…RVQP), 251–276 (QSLD…PSAL), 277–297 (RSLN…PPKL), 298–319 (SVLD…LPEV), and 320–347 (NDLT…SGVV). N-linked (GlcNAc...) asparagine glycosylation is present at N150. 2 disulfide bridges follow: C186-C216 and C240-C270. N280 carries an N-linked (GlcNAc...) asparagine glycan. Residues 288-373 (QVPKGLPPKL…ALLQGARGFA (86 aa)) are required for response to bacterial lipopolysaccharide (LPS).

Belongs to the lipopolysaccharide (LPS) receptor, a multi-protein complex containing at least CD14, LY96 and TLR4. Interacts with LPS-bound LPB. Interacts with LPAR1. Interacts with the TLR2:TLR6 or TLR2:TLR1 heterodimers; upon interaction with ligands such as diacylated lipopeptides and triacylated lipopeptides, respectively. Interacts with MYO18A. Interacts with FSTL1. Detected in lung. Detected in brain and kidney. Detected in trachea and bone marrow.

It localises to the cell membrane. It is found in the secreted. The protein localises to the membrane raft. Its subcellular location is the golgi apparatus. Functionally, coreceptor for bacterial lipopolysaccharide. In concert with LBP, binds to monomeric lipopolysaccharide and delivers it to the LY96/TLR4 complex, thereby mediating the innate immune response to bacterial lipopolysaccharide (LPS). Acts via MyD88, TIRAP and TRAF6, leading to NF-kappa-B activation, cytokine secretion and the inflammatory response. Acts as a coreceptor for TLR2:TLR6 heterodimer in response to diacylated lipopeptides and for TLR2:TLR1 heterodimer in response to triacylated lipopeptides, these clusters trigger signaling from the cell surface and subsequently are targeted to the Golgi in a lipid-raft dependent pathway. Binds electronegative LDL (LDL(-)) and mediates the cytokine release induced by LDL(-). The polypeptide is Monocyte differentiation antigen CD14 (CD14) (Bos taurus (Bovine)).